The following is a 414-amino-acid chain: Ribulose bisphosphate carboxylase large chain (414 aa).

Substrate is bound by residues asparagine 102 and threonine 152. Lysine 154 serves as the catalytic Proton acceptor. Lysine 156 serves as a coordination point for substrate. Mg(2+) contacts are provided by lysine 180, aspartate 182, and glutamate 183. Lysine 180 carries the N6-carboxylysine modification. Histidine 273 functions as the Proton acceptor in the catalytic mechanism. The substrate site is built by arginine 274, histidine 306, and serine 358.

This sequence belongs to the RuBisCO large chain family. Type I subfamily. As to quaternary structure, heterohexadecamer of 8 large chains and 8 small chains; disulfide-linked. The disulfide link is formed within the large subunit homodimers. Requires Mg(2+) as cofactor. The disulfide bond which can form in the large chain dimeric partners within the hexadecamer appears to be associated with oxidative stress and protein turnover.

The protein localises to the plastid. Its subcellular location is the chloroplast. It catalyses the reaction 2 (2R)-3-phosphoglycerate + 2 H(+) = D-ribulose 1,5-bisphosphate + CO2 + H2O. The catalysed reaction is D-ribulose 1,5-bisphosphate + O2 = 2-phosphoglycolate + (2R)-3-phosphoglycerate + 2 H(+). RuBisCO catalyzes two reactions: the carboxylation of D-ribulose 1,5-bisphosphate, the primary event in carbon dioxide fixation, as well as the oxidative fragmentation of the pentose substrate in the photorespiration process. Both reactions occur simultaneously and in competition at the same active site. This is Ribulose bisphosphate carboxylase large chain (rbcL) from Antrophyum reticulatum (Ox-tongue fern).